A 488-amino-acid chain; its full sequence is Glycogen synthase (488 aa).

Residue K16 coordinates ADP-alpha-D-glucose.

Belongs to the glycosyltransferase 1 family. Bacterial/plant glycogen synthase subfamily.

The enzyme catalyses [(1-&gt;4)-alpha-D-glucosyl](n) + ADP-alpha-D-glucose = [(1-&gt;4)-alpha-D-glucosyl](n+1) + ADP + H(+). It participates in glycan biosynthesis; glycogen biosynthesis. Synthesizes alpha-1,4-glucan chains using ADP-glucose. The chain is Glycogen synthase from Marinobacter nauticus (strain ATCC 700491 / DSM 11845 / VT8) (Marinobacter aquaeolei).